A 262-amino-acid polypeptide reads, in one-letter code: Cerebellar degeneration-related antigen 1 (262 aa).

Tandem repeats lie at residues 3–8 (WLEDVD), 9–14 (FLEDVP), 15–20 (LLEDIP), 21–26 (LLEDVP), 27–32 (LLEDVP), 33–38 (LLEDTS), 39–44 (RLEDIN), 45–50 (LMEDMA), 51–56 (LLEDVD), 57–62 (LLEDTD), 63–68 (FLEDLD), 69–74 (FSEAMD), 75–80 (LREDKD), 81–86 (FLEDMD), 87–92 (SLEDMA), 93–98 (LLEDVD), 99–104 (LLEDTD), 105–110 (FLEDPD), 111–116 (FLEAID), 117–122 (LREDKD), 123–128 (FLEDMD), 129–134 (SLEDLE), 135–140 (AIGRCG), 141–146 (FSGRHG), 147–152 (FFGRRR), 153–158 (FSGRPK), 159–164 (LSGRLG), 165–170 (LLGRRG), 171–176 (FSGRLG), 177–182 (GYWKTW), 183–188 (IFWKTW), 189–194 (IFWKTW), 195–200 (IFRKTY), and 201–206 (IGWKTW). Residues 3-140 (WLEDVDFLED…EDLEAIGRCG (138 aa)) are 23 X 6 AA approximate repeats. Residues 141-176 (FSGRHGFFGRRRFSGRPKLSGRLGLLGRRGFSGRLG) form a 6 X 6 AA approximate repeats region. The tract at residues 177 to 206 (GYWKTWIFWKTWIFWKTWIFRKTYIGWKTW) is 5 X 6 AA approximate repeats.

Brain; predominantly expressed in normal neuroectodermal tissues and in certain malignant tumors.

This is Cerebellar degeneration-related antigen 1 (CDR1) from Homo sapiens (Human).